We begin with the raw amino-acid sequence, 330 residues long: Acrylyl-CoA reductase AcuI (330 aa).

NADP(+) is bound by residues Tyr-44, 159-162 (AGGV), 181-183 (TGR), Arg-201, Leu-247, and Ser-272.

The protein belongs to the zinc-containing alcohol dehydrogenase family. Acrylyl-CoA reductase subfamily. In terms of assembly, homodimer.

The protein localises to the cytoplasm. It carries out the reaction propanoyl-CoA + NADP(+) = acryloyl-CoA + NADPH + H(+). Its function is as follows. Probably catalyzes the NADPH-dependent reduction of acrylyl-CoA to propanoyl-CoA. Restores acrylate resistance when expressed in an E.coli strain K12 acuI deletion. The sequence is that of Acrylyl-CoA reductase AcuI (acuI) from Ruegeria pomeroyi (strain ATCC 700808 / DSM 15171 / DSS-3) (Silicibacter pomeroyi).